Reading from the N-terminus, the 62-residue chain is Sperm protamine P1 (62 aa).

Residues 1–62 (MARYRHSRSR…RYSRRGRRRY (62 aa)) are disordered.

It belongs to the protamine P1 family. In terms of tissue distribution, testis.

Its subcellular location is the nucleus. It localises to the chromosome. Protamines substitute for histones in the chromatin of sperm during the haploid phase of spermatogenesis. They compact sperm DNA into a highly condensed, stable and inactive complex. This Trichosurus vulpecula (Brush-tailed possum) protein is Sperm protamine P1 (PRM1).